The primary structure comprises 191 residues: Hypoxanthine/guanine phosphoribosyltransferase (191 aa).

It belongs to the purine/pyrimidine phosphoribosyltransferase family. Archaeal HPRT subfamily. As to quaternary structure, homodimer.

The protein localises to the cytoplasm. It carries out the reaction IMP + diphosphate = hypoxanthine + 5-phospho-alpha-D-ribose 1-diphosphate. It catalyses the reaction GMP + diphosphate = guanine + 5-phospho-alpha-D-ribose 1-diphosphate. It participates in purine metabolism; IMP biosynthesis via salvage pathway; IMP from hypoxanthine: step 1/1. Catalyzes a salvage reaction resulting in the formation of IMP that is energically less costly than de novo synthesis. The chain is Hypoxanthine/guanine phosphoribosyltransferase from Methanocella paludicola (strain DSM 17711 / JCM 13418 / NBRC 101707 / SANAE).